A 491-amino-acid polypeptide reads, in one-letter code: MNNTAPGLLHQPKPFFMIFFVELWERFGYYGVQGILAVFFVKQLGFSQEQAFITFGAFAALVYGLISIGGYVGDHLLGTKRTMVLGAIVLALGYFMTGMSLLKPEMIFIALGTIAVGNGLFKANPASLLSKCYPPKDPRLDGAFTLFYMSINIGSLLSLSLAPIIAERFGYAVTYNLCGLGLIIALLVYFACRGMVRSIGSAPDHQPLNYGKLLLVLAGAVVMIFLCAWLMHNVGVANIVLIAVSAVVLYFFFREAFKQDKTGRNRMFVAFILMIEAVLFYILYAQMPTSLNFFAINNVRHELLGFAINPVSFQALNPFWVVVASPILASIYTRLGSRGRDMTMPTKFTLGMLLCSLGFLTAAAAGMWFADAQGLTSPWFVVLVYLFQSLGELMISALGLAMVAALVPQYLMGFILGMWFLTQAAAFLLGGYVATFTAVPAGIHDPLQTLPIYTGVFGKIGIATLIVTLVMAAMVPWLNRMMNTPADGQKA.

Topologically, residues 1–26 (MNNTAPGLLHQPKPFFMIFFVELWER) are cytoplasmic. A helical membrane pass occupies residues 27-47 (FGYYGVQGILAVFFVKQLGFS). Over 48-51 (QEQA) the chain is Periplasmic. The helical transmembrane segment at 52 to 72 (FITFGAFAALVYGLISIGGYV) threads the bilayer. The Cytoplasmic portion of the chain corresponds to 73-81 (GDHLLGTKR). A helical membrane pass occupies residues 82–102 (TMVLGAIVLALGYFMTGMSLL). Over 103 to 105 (KPE) the chain is Periplasmic. Residues 106 to 126 (MIFIALGTIAVGNGLFKANPA) traverse the membrane as a helical segment. At 127–145 (SLLSKCYPPKDPRLDGAFT) the chain is on the cytoplasmic side. Residues 146-166 (LFYMSINIGSLLSLSLAPIIA) form a helical membrane-spanning segment. The Periplasmic segment spans residues 167–171 (ERFGY). Residues 172 to 192 (AVTYNLCGLGLIIALLVYFAC) form a helical membrane-spanning segment. At 193-210 (RGMVRSIGSAPDHQPLNY) the chain is on the cytoplasmic side. Residues 211–231 (GKLLLVLAGAVVMIFLCAWLM) form a helical membrane-spanning segment. A topological domain (periplasmic) is located at residue H232. A helical membrane pass occupies residues 233–253 (NVGVANIVLIAVSAVVLYFFF). Topologically, residues 254-266 (REAFKQDKTGRNR) are cytoplasmic. The chain crosses the membrane as a helical span at residues 267 to 287 (MFVAFILMIEAVLFYILYAQM). At 288 to 312 (PTSLNFFAINNVRHELLGFAINPVS) the chain is on the periplasmic side. The helical transmembrane segment at 313–335 (FQALNPFWVVVASPILASIYTRL) threads the bilayer. Residues 336–349 (GSRGRDMTMPTKFT) are Cytoplasmic-facing. Residues 350 to 370 (LGMLLCSLGFLTAAAAGMWFA) traverse the membrane as a helical segment. Topologically, residues 371–378 (DAQGLTSP) are periplasmic. A helical membrane pass occupies residues 379–399 (WFVVLVYLFQSLGELMISALG). At 400 to 423 (LAMVAALVPQYLMGFILGMWFLTQ) the chain is on the cytoplasmic side. A helical membrane pass occupies residues 424–444 (AAAFLLGGYVATFTAVPAGIH). Residues 445–454 (DPLQTLPIYT) lie on the Periplasmic side of the membrane. Residues 455 to 475 (GVFGKIGIATLIVTLVMAAMV) traverse the membrane as a helical segment. Over 476–491 (PWLNRMMNTPADGQKA) the chain is Cytoplasmic.

It belongs to the major facilitator superfamily. Proton-dependent oligopeptide transporter (POT/PTR) (TC 2.A.17) family. DtpB subfamily.

The protein localises to the cell inner membrane. Its function is as follows. Proton-dependent permease that transports di- and tripeptides. This Edwardsiella piscicida protein is Dipeptide and tripeptide permease B.